A 524-amino-acid polypeptide reads, in one-letter code: tRNA-2-methylthio-N(6)-dimethylallyladenosine synthase (524 aa).

Residues 1 to 12 show a composition bias toward basic and acidic residues; sequence MNTHPSHPDHPA. The segment at 1–23 is disordered; that stretch reads MNTHPSHPDHPADTLPARGNREG. Residues 27–143 enclose the MTTase N-terminal domain; that stretch reads RTYEVRTFGC…LPTLLNRAEH (117 aa). 6 residues coordinate [4Fe-4S] cluster: cysteine 36, cysteine 72, cysteine 106, cysteine 180, cysteine 184, and cysteine 187. Residues 166-402 enclose the Radical SAM core domain; sequence RESAYAGWVS…MALQERICEE (237 aa). The 72-residue stretch at 405 to 476 folds into the TRAM domain; it reads QKFIGQTVEL…PFFLIADAGV (72 aa).

The protein belongs to the methylthiotransferase family. MiaB subfamily. In terms of assembly, monomer. The cofactor is [4Fe-4S] cluster.

The protein localises to the cytoplasm. The catalysed reaction is N(6)-dimethylallyladenosine(37) in tRNA + (sulfur carrier)-SH + AH2 + 2 S-adenosyl-L-methionine = 2-methylsulfanyl-N(6)-dimethylallyladenosine(37) in tRNA + (sulfur carrier)-H + 5'-deoxyadenosine + L-methionine + A + S-adenosyl-L-homocysteine + 2 H(+). In terms of biological role, catalyzes the methylthiolation of N6-(dimethylallyl)adenosine (i(6)A), leading to the formation of 2-methylthio-N6-(dimethylallyl)adenosine (ms(2)i(6)A) at position 37 in tRNAs that read codons beginning with uridine. In Corynebacterium efficiens (strain DSM 44549 / YS-314 / AJ 12310 / JCM 11189 / NBRC 100395), this protein is tRNA-2-methylthio-N(6)-dimethylallyladenosine synthase.